The chain runs to 179 residues: ATP synthase subunit delta (179 aa).

Belongs to the ATPase delta chain family. In terms of assembly, F-type ATPases have 2 components, F(1) - the catalytic core - and F(0) - the membrane proton channel. F(1) has five subunits: alpha(3), beta(3), gamma(1), delta(1), epsilon(1). F(0) has three main subunits: a(1), b(2) and c(10-14). The alpha and beta chains form an alternating ring which encloses part of the gamma chain. F(1) is attached to F(0) by a central stalk formed by the gamma and epsilon chains, while a peripheral stalk is formed by the delta and b chains.

The protein resides in the cell inner membrane. In terms of biological role, f(1)F(0) ATP synthase produces ATP from ADP in the presence of a proton or sodium gradient. F-type ATPases consist of two structural domains, F(1) containing the extramembraneous catalytic core and F(0) containing the membrane proton channel, linked together by a central stalk and a peripheral stalk. During catalysis, ATP synthesis in the catalytic domain of F(1) is coupled via a rotary mechanism of the central stalk subunits to proton translocation. Its function is as follows. This protein is part of the stalk that links CF(0) to CF(1). It either transmits conformational changes from CF(0) to CF(1) or is implicated in proton conduction. The sequence is that of ATP synthase subunit delta from Acidithiobacillus ferridurans.